The chain runs to 349 residues: UDP-N-acetylenolpyruvoylglucosamine reductase (349 aa).

Residues 26–197 (FDARARVAAR…VAVTFRLPKA (172 aa)) form the FAD-binding PCMH-type domain. The active site involves arginine 173. Serine 249 functions as the Proton donor in the catalytic mechanism. Glutamate 345 is an active-site residue.

This sequence belongs to the MurB family. FAD serves as cofactor.

It is found in the cytoplasm. The catalysed reaction is UDP-N-acetyl-alpha-D-muramate + NADP(+) = UDP-N-acetyl-3-O-(1-carboxyvinyl)-alpha-D-glucosamine + NADPH + H(+). It functions in the pathway cell wall biogenesis; peptidoglycan biosynthesis. Cell wall formation. The sequence is that of UDP-N-acetylenolpyruvoylglucosamine reductase from Burkholderia pseudomallei (strain 1710b).